Reading from the N-terminus, the 378-residue chain is Succinyl-diaminopimelate desuccinylase (378 aa).

H67 contacts Zn(2+). D69 is a catalytic residue. A Zn(2+)-binding site is contributed by D100. The Proton acceptor role is filled by E134. The Zn(2+) site is built by E135, E163, and H349.

Belongs to the peptidase M20A family. DapE subfamily. Homodimer. It depends on Zn(2+) as a cofactor. Co(2+) is required as a cofactor.

The enzyme catalyses N-succinyl-(2S,6S)-2,6-diaminopimelate + H2O = (2S,6S)-2,6-diaminopimelate + succinate. It participates in amino-acid biosynthesis; L-lysine biosynthesis via DAP pathway; LL-2,6-diaminopimelate from (S)-tetrahydrodipicolinate (succinylase route): step 3/3. Functionally, catalyzes the hydrolysis of N-succinyl-L,L-diaminopimelic acid (SDAP), forming succinate and LL-2,6-diaminopimelate (DAP), an intermediate involved in the bacterial biosynthesis of lysine and meso-diaminopimelic acid, an essential component of bacterial cell walls. This chain is Succinyl-diaminopimelate desuccinylase, found in Pasteurella multocida (strain Pm70).